An 83-amino-acid polypeptide reads, in one-letter code: EMBRYO SURROUNDING FACTOR 1.1 (83 aa).

The signal sequence occupies residues 1–22 (MKSSHTSLICILMLSLVALHQC). 4 disulfides stabilise this stretch: Cys41–Cys56, Cys46–Cys75, Cys54–Cys71, and Cys57–Cys64.

This sequence belongs to the MEG family. Expressed exclusively in ovule embryo sacs and in early developing endosperms.

Maternally-contributed central cell peptide regulating suspensor development and correct auxin distribution in early developing embryos. The polypeptide is EMBRYO SURROUNDING FACTOR 1.1 (ESF1.1) (Arabidopsis thaliana (Mouse-ear cress)).